Reading from the N-terminus, the 92-residue chain is Subtilisin inhibitor 1 (92 aa).

The span at Gln1–Asn12 shows a compositional bias: polar residues. A disordered region spans residues Gln1–Thr31.

The protein belongs to the protease inhibitor I13 (potato type I serine protease inhibitor) family.

In terms of biological role, inhibitor of subtilisin. The chain is Subtilisin inhibitor 1 from Phaseolus angularis (Azuki bean).